The sequence spans 278 residues: Heat stress transcription factor C-2b (278 aa).

The span at 105-114 (AAGGGGGGGG) shows a compositional bias: gly residues. The tract at residues 105–132 (AAGGGGGGGGGKRRDASADGGGGGGDED) is disordered. Positions 143–179 (LKQEQRTIDDRVAAMWRRVQETERRPKQMLAFLLKVV) are hydrophobic repeat HR-A/B. A Nuclear localization signal motif is present at residues 219 to 222 (KRAR).

It belongs to the HSF family. Class C subfamily. In terms of assembly, homotrimer. Post-translationally, exhibits temperature-dependent phosphorylation.

It is found in the nucleus. Transcriptional regulator that specifically binds DNA of heat shock promoter elements (HSE). In Oryza sativa subsp. japonica (Rice), this protein is Heat stress transcription factor C-2b (HSFC2B).